We begin with the raw amino-acid sequence, 1040 residues long: Multidrug resistance protein MdtB (1040 aa).

12 consecutive transmembrane segments (helical) span residues 16–36 (FIMR…AGII), 342–362 (DTQF…YLFL), 369–389 (IIPG…MVFL), 396–416 (LTLM…IVVI), 440–460 (IGFT…PLLF), 472–492 (FAVT…TLTP), 537–557 (WLTL…WVFI), 863–883 (LGST…VLGV), 888–908 (FIHP…ALLA), 911–931 (LAGS…IGIV), 968–988 (ILMT…STGV), and 998–1018 (IGMV…TPVI).

Belongs to the resistance-nodulation-cell division (RND) (TC 2.A.6) family. MdtB subfamily. In terms of assembly, part of a tripartite efflux system composed of MdtA, MdtB and MdtC. MdtB forms a heteromultimer with MdtC.

The protein resides in the cell inner membrane. In Klebsiella pneumoniae subsp. pneumoniae (strain ATCC 700721 / MGH 78578), this protein is Multidrug resistance protein MdtB.